A 452-amino-acid polypeptide reads, in one-letter code: Chromosomal replication initiator protein DnaA (452 aa).

The tract at residues 1–85 is domain I, interacts with DnaA modulators; that stretch reads MSTTAWQKCL…IEVGSKPVEA (85 aa). A domain II region spans residues 85 to 115; it reads AVDTPAETIVTSSSTAPLKSAPKKAVDYKSS. Residues 116–332 form a domain III, AAA+ region region; the sequence is HLNKKFVFDS…GALRRVIANA (217 aa). G160, G162, K163, and T164 together coordinate ATP. The domain IV, binds dsDNA stretch occupies residues 333-452; it reads HFTGKPITIE…YKNLMRILSS (120 aa).

This sequence belongs to the DnaA family. In terms of assembly, oligomerizes as a right-handed, spiral filament on DNA at oriC.

It localises to the cytoplasm. In terms of biological role, plays an essential role in the initiation and regulation of chromosomal replication. ATP-DnaA binds to the origin of replication (oriC) to initiate formation of the DNA replication initiation complex once per cell cycle. Binds the DnaA box (a 9 base pair repeat at the origin) and separates the double-stranded (ds)DNA. Forms a right-handed helical filament on oriC DNA; dsDNA binds to the exterior of the filament while single-stranded (ss)DNA is stabiized in the filament's interior. The ATP-DnaA-oriC complex binds and stabilizes one strand of the AT-rich DNA unwinding element (DUE), permitting loading of DNA polymerase. After initiation quickly degrades to an ADP-DnaA complex that is not apt for DNA replication. Binds acidic phospholipids. In Legionella pneumophila (strain Paris), this protein is Chromosomal replication initiator protein DnaA.